Here is a 294-residue protein sequence, read N- to C-terminus: Cell division control protein 2 homolog A (294 aa).

Residues 4–287 (YEKVEKIGEG…ARNALQHEYF (284 aa)) form the Protein kinase domain. Residues 10–18 (IGEGTYGVV) and lysine 33 each bind ATP. Threonine 14 bears the Phosphothreonine mark. Residue tyrosine 15 is modified to Phosphotyrosine. Aspartate 127 (proton acceptor) is an active-site residue. A Phosphothreonine; by CAK modification is found at threonine 161.

The protein belongs to the protein kinase superfamily. CMGC Ser/Thr protein kinase family. CDC2/CDKX subfamily.

It catalyses the reaction L-seryl-[protein] + ATP = O-phospho-L-seryl-[protein] + ADP + H(+). The catalysed reaction is L-threonyl-[protein] + ATP = O-phospho-L-threonyl-[protein] + ADP + H(+). It carries out the reaction [DNA-directed RNA polymerase] + ATP = phospho-[DNA-directed RNA polymerase] + ADP + H(+). Its activity is regulated as follows. Phosphorylation at Thr-14 or Tyr-15 inactivates the enzyme, while phosphorylation at Thr-161 activates it. Functionally, plays a key role in the control of the eukaryotic cell cycle. This is Cell division control protein 2 homolog A (CDC2A) from Antirrhinum majus (Garden snapdragon).